The following is a 408-amino-acid chain: tRNA-specific 2-thiouridylase MnmA (408 aa).

ATP-binding positions include 27–34 and L53; that span reads AMSGGVDS. C121 (nucleophile) is an active-site residue. C121 and C222 are oxidised to a cystine. G145 serves as a coordination point for ATP. The tract at residues 172-174 is interaction with tRNA; sequence RDQ. C222 (cysteine persulfide intermediate) is an active-site residue.

This sequence belongs to the MnmA/TRMU family.

The protein localises to the cytoplasm. It carries out the reaction S-sulfanyl-L-cysteinyl-[protein] + uridine(34) in tRNA + AH2 + ATP = 2-thiouridine(34) in tRNA + L-cysteinyl-[protein] + A + AMP + diphosphate + H(+). Catalyzes the 2-thiolation of uridine at the wobble position (U34) of tRNA, leading to the formation of s(2)U34. This chain is tRNA-specific 2-thiouridylase MnmA, found in Rhizobium johnstonii (strain DSM 114642 / LMG 32736 / 3841) (Rhizobium leguminosarum bv. viciae).